Reading from the N-terminus, the 184-residue chain is Large ribosomal subunit protein uL5c (184 aa).

It belongs to the universal ribosomal protein uL5 family. In terms of assembly, part of the 50S ribosomal subunit; contacts the 5S rRNA.

The protein localises to the plastid. It is found in the chloroplast. In terms of biological role, binds 5S rRNA, forms part of the central protuberance of the 50S subunit. The chain is Large ribosomal subunit protein uL5c (rpl5) from Mesostigma viride (Green alga).